Reading from the N-terminus, the 377-residue chain is Nitric oxide reductase FlRd-NAD(+) reductase (377 aa).

The protein belongs to the FAD-dependent oxidoreductase family. It depends on FAD as a cofactor.

The protein resides in the cytoplasm. It catalyses the reaction 2 reduced [nitric oxide reductase rubredoxin domain] + NAD(+) + H(+) = 2 oxidized [nitric oxide reductase rubredoxin domain] + NADH. The protein operates within nitrogen metabolism; nitric oxide reduction. One of at least two accessory proteins for anaerobic nitric oxide (NO) reductase. Reduces the rubredoxin moiety of NO reductase. This chain is Nitric oxide reductase FlRd-NAD(+) reductase, found in Salmonella newport (strain SL254).